Reading from the N-terminus, the 512-residue chain is ATP synthase subunit alpha (512 aa).

ATP is bound at residue 169–176 (GDRQTGKT).

This sequence belongs to the ATPase alpha/beta chains family. As to quaternary structure, F-type ATPases have 2 components, CF(1) - the catalytic core - and CF(0) - the membrane proton channel. CF(1) has five subunits: alpha(3), beta(3), gamma(1), delta(1), epsilon(1). CF(0) has four main subunits: a(1), b(1), b'(1) and c(9-12).

Its subcellular location is the cell inner membrane. It catalyses the reaction ATP + H2O + 4 H(+)(in) = ADP + phosphate + 5 H(+)(out). Its function is as follows. Produces ATP from ADP in the presence of a proton gradient across the membrane. The alpha chain is a regulatory subunit. In Roseobacter denitrificans (strain ATCC 33942 / OCh 114) (Erythrobacter sp. (strain OCh 114)), this protein is ATP synthase subunit alpha.